Here is a 334-residue protein sequence, read N- to C-terminus: Glutaminase (334 aa).

Residues S76, N126, E170, N177, Y201, Y253, and V271 each contribute to the substrate site.

Belongs to the glutaminase family. In terms of assembly, homotetramer.

It carries out the reaction L-glutamine + H2O = L-glutamate + NH4(+). This is Glutaminase from Nostoc sp. (strain PCC 7120 / SAG 25.82 / UTEX 2576).